Consider the following 806-residue polypeptide: Leucine--tRNA ligase (806 aa).

The short motif at 40–51 (PYPSGAGLHVGH) is the 'HIGH' region element. Positions 576-580 (KMSKS) match the 'KMSKS' region motif. Position 579 (K579) interacts with ATP.

It belongs to the class-I aminoacyl-tRNA synthetase family.

It is found in the cytoplasm. It carries out the reaction tRNA(Leu) + L-leucine + ATP = L-leucyl-tRNA(Leu) + AMP + diphosphate. The chain is Leucine--tRNA ligase from Halalkalibacterium halodurans (strain ATCC BAA-125 / DSM 18197 / FERM 7344 / JCM 9153 / C-125) (Bacillus halodurans).